The chain runs to 511 residues: GMP synthase [glutamine-hydrolyzing] (511 aa).

The 191-residue stretch at 5 to 195 (AILVLDFGSQ…VFKICQAQIN (191 aa)) folds into the Glutamine amidotransferase type-1 domain. C82 (nucleophile) is an active-site residue. Residues H169 and E171 contribute to the active site. The region spanning 196 to 386 (WSLEGNLETI…LGIKKESLYR (191 aa)) is the GMPS ATP-PPase domain. Residue 223–229 (SGGTDSL) participates in ATP binding.

Homodimer.

The catalysed reaction is XMP + L-glutamine + ATP + H2O = GMP + L-glutamate + AMP + diphosphate + 2 H(+). It functions in the pathway purine metabolism; GMP biosynthesis; GMP from XMP (L-Gln route): step 1/1. In terms of biological role, catalyzes the synthesis of GMP from XMP. In Borreliella burgdorferi (strain N40) (Borrelia burgdorferi), this protein is GMP synthase [glutamine-hydrolyzing] (guaA).